The sequence spans 313 residues: tRNA uridine(34) hydroxylase (313 aa).

Positions 124-218 (SDPEVLLIDT…YLEEVPQEET (95 aa)) constitute a Rhodanese domain. Cys-178 functions as the Cysteine persulfide intermediate in the catalytic mechanism.

This sequence belongs to the TrhO family.

It catalyses the reaction uridine(34) in tRNA + AH2 + O2 = 5-hydroxyuridine(34) in tRNA + A + H2O. Catalyzes oxygen-dependent 5-hydroxyuridine (ho5U) modification at position 34 in tRNAs. In Pseudomonas fluorescens (strain SBW25), this protein is tRNA uridine(34) hydroxylase.